The following is a 356-amino-acid chain: Histidinol-phosphate aminotransferase (356 aa).

An N6-(pyridoxal phosphate)lysine modification is found at Lys214.

The protein belongs to the class-II pyridoxal-phosphate-dependent aminotransferase family. Histidinol-phosphate aminotransferase subfamily. Homodimer. The cofactor is pyridoxal 5'-phosphate.

It catalyses the reaction L-histidinol phosphate + 2-oxoglutarate = 3-(imidazol-4-yl)-2-oxopropyl phosphate + L-glutamate. It functions in the pathway amino-acid biosynthesis; L-histidine biosynthesis; L-histidine from 5-phospho-alpha-D-ribose 1-diphosphate: step 7/9. The sequence is that of Histidinol-phosphate aminotransferase from Aromatoleum aromaticum (strain DSM 19018 / LMG 30748 / EbN1) (Azoarcus sp. (strain EbN1)).